Consider the following 337-residue polypeptide: MTNSVFQGRSLLAEKDFTKSELEYLIDFSLHLKDLKKKGIPHHYLEGKNIALLFEKNSTRTRAAFTTAAIDLGAHPEFLGKNDIQLGKKESVEDTAKVLGSMFDGIEFRALAKVVEDLAKYSGVPVWNGLTDEWHPTQMIADFMTVKENFGKLKGVTLTYVGDGRNNMANSLLVTGSMLGVNIHIVAPDSLQPTQEVRDLAEGYAKETGSKNMITSDVDAGVKGSDVLYTDVWVSMGEEDKFEERVNLLKPYQINMDMVKKTGNENMIIMHCLPAFHDIETEYGKKIDEQFGIQEMEITDEAFRSKYARQFEEAENRMHSIKAIMAATLGNLFIPQA.

Carbamoyl phosphate contacts are provided by residues 58–61 (STRT), Gln-85, Arg-109, and 135–138 (HPTQ). L-ornithine-binding positions include Asn-167, Asp-231, and 235–236 (SM). Carbamoyl phosphate is bound by residues 272–273 (CL) and Arg-317.

This sequence belongs to the aspartate/ornithine carbamoyltransferase superfamily. OTCase family.

It is found in the cytoplasm. It carries out the reaction carbamoyl phosphate + L-ornithine = L-citrulline + phosphate + H(+). The protein operates within amino-acid degradation; L-arginine degradation via ADI pathway; carbamoyl phosphate from L-arginine: step 2/2. In terms of biological role, reversibly catalyzes the transfer of the carbamoyl group from carbamoyl phosphate (CP) to the N(epsilon) atom of ornithine (ORN) to produce L-citrulline. The protein is Ornithine carbamoyltransferase, catabolic (arcB) of Latilactobacillus sakei (Lactobacillus sakei).